A 495-amino-acid polypeptide reads, in one-letter code: MTHILAIDQGTTSSRAIIFDASMNITASAQEEFAQHYPDSGWVEHDPGDLWATTAGTCRAAIEKAGLKPEDIAAIGITNQRETVVVWDKTSGQPVYNAIVWQDRRTAAYCKTLRDEGHDKMITARTGLLADPYFSATKLKWILDNVEGARDRATRGELLFGTVDTFLIWKLTGGAAHVTDATNAARTSLYDIHKGRWSQTICALFDIPQQMLPEVKDCAADFGVTRSDLFGRPVPILGVAGDQQAATIGQACFEPGMLKSTYGTGCFALLNTGDTAVASSNRLLTTIAYQFDGKPTYALEGSIFVAGAVVQWLRDGLQTIRKASETQAMAERADPNQNVVLVPAFVGLGAPYWDAECRGAVFGLTRNSGPDEFARAALESVGYQTRDLLDAMTADWQGSDVRATLRVDGGMSASDWAMQFLSDIIDAPVDRPKVLETTALGAAWLAGQRAGLYPDQAGFAASWALEKTFAPQMDAALRDRKYAAWKRAVDATLRF.

Thr11 is an ADP binding site. ATP is bound by residues Thr11, Thr12, and Ser13. Thr11 serves as a coordination point for sn-glycerol 3-phosphate. ADP is bound at residue Arg15. Sn-glycerol 3-phosphate-binding residues include Arg81, Glu82, Tyr133, and Asp242. Residues Arg81, Glu82, Tyr133, Asp242, and Gln243 each coordinate glycerol. ADP-binding residues include Thr264 and Gly307. Residues Thr264, Gly307, Gln311, and Gly410 each contribute to the ATP site. Gly410 is a binding site for ADP.

Belongs to the FGGY kinase family.

The catalysed reaction is glycerol + ATP = sn-glycerol 3-phosphate + ADP + H(+). Its pathway is polyol metabolism; glycerol degradation via glycerol kinase pathway; sn-glycerol 3-phosphate from glycerol: step 1/1. Its activity is regulated as follows. Inhibited by fructose 1,6-bisphosphate (FBP). Its function is as follows. Key enzyme in the regulation of glycerol uptake and metabolism. Catalyzes the phosphorylation of glycerol to yield sn-glycerol 3-phosphate. This chain is Glycerol kinase, found in Roseobacter denitrificans (strain ATCC 33942 / OCh 114) (Erythrobacter sp. (strain OCh 114)).